Reading from the N-terminus, the 218-residue chain is Synaptonemal complex central element protein 2 (218 aa).

The span at 1-32 (MERQGVDVPHVKCKDQEPQPLGESKEHPRWEE) shows a compositional bias: basic and acidic residues. Residues 1 to 42 (MERQGVDVPHVKCKDQEPQPLGESKEHPRWEENCEEEAGGGP) are disordered. Residues 61-87 (SSLDSSIDILQKRAQELIENINKSRQK) adopt a coiled-coil conformation. Positions 171–218 (RWGPDHSRGKSPPRPGNSQPPDVFVSSVAETTSQATASEVQTNRDGEC) are disordered. Residues 198–211 (VAETTSQATASEVQ) show a composition bias toward polar residues.

This sequence belongs to the SYCE family. Homodimer. Found in a complex with SYCP1 and SYCE1. Interacts with SYCP1, SYCE1 and SYCE3. Interacts with TEX12.

Its subcellular location is the nucleus. It localises to the chromosome. Major component of the transverse central element of synaptonemal complexes (SCS), formed between homologous chromosomes during meiotic prophase. Requires SYCP1 in order to be incorporated into the central element. May have a role in the synaptonemal complex assembly, stabilization and recombination. This chain is Synaptonemal complex central element protein 2 (SYCE2), found in Homo sapiens (Human).